The sequence spans 140 residues: MLSPRRTKFRKQQRGRMEGAATRGNTLTFGDYGLQALEPAWITARQIEAGRRAMTRYIRRGGKIWIRLFPDKPVTMRPAETRMGSGKGAPEFWVAVVKPGRIMYEIAGVSEEVAREAIRLAAYKMPIKTKFIMRETTEES.

Over residues 1-14 the composition is skewed to basic residues; the sequence is MLSPRRTKFRKQQR. The segment at 1–22 is disordered; the sequence is MLSPRRTKFRKQQRGRMEGAAT.

Belongs to the universal ribosomal protein uL16 family. In terms of assembly, part of the 50S ribosomal subunit.

Functionally, binds 23S rRNA and is also seen to make contacts with the A and possibly P site tRNAs. The chain is Large ribosomal subunit protein uL16 from Cyanothece sp. (strain PCC 7425 / ATCC 29141).